The chain runs to 5263 residues: Fibroin heavy chain (5263 aa).

The first 21 residues, 1–21 (MRVKTFVILCCALQYVAYTNA), serve as a signal peptide directing secretion. The highly repetitive stretch occupies residues 149 to 5206 (AAVGAGAGAG…GSGAGAGGSV (5058 aa)). A disulfide bond links cysteine 5260 and cysteine 5263.

In terms of assembly, silk fibroin elementary unit consists in a disulfide-linked heavy and light chain and a p25 glycoprotein in molar ratios of 6:6:1. This results in a complex of approximately 2.3 MDa. Post-translationally, the interchain disulfide bridge is essential for the intracellular transport and secretion of fibroin. As to expression, produced exclusively in the posterior (PSG) section of silk glands, which are essentially modified salivary glands.

In terms of biological role, core component of the silk filament; a strong, insoluble and chemically inert fiber. The sequence is that of Fibroin heavy chain (FIBH) from Bombyx mori (Silk moth).